The chain runs to 542 residues: ATP synthase subunit alpha (542 aa).

ATP is bound at residue 173-180; sequence GDRQTGKT. Residues 518–542 are disordered; it reads PLVEKKPDEKHTTPVEQEKIVAGEK. The span at 519–542 shows a compositional bias: basic and acidic residues; that stretch reads LVEKKPDEKHTTPVEQEKIVAGEK.

This sequence belongs to the ATPase alpha/beta chains family. As to quaternary structure, F-type ATPases have 2 components, CF(1) - the catalytic core - and CF(0) - the membrane proton channel. CF(1) has five subunits: alpha(3), beta(3), gamma(1), delta(1), epsilon(1). CF(0) has three main subunits: a(1), b(2) and c(9-12). The alpha and beta chains form an alternating ring which encloses part of the gamma chain. CF(1) is attached to CF(0) by a central stalk formed by the gamma and epsilon chains, while a peripheral stalk is formed by the delta and b chains.

Its subcellular location is the cell membrane. The catalysed reaction is ATP + H2O + 4 H(+)(in) = ADP + phosphate + 5 H(+)(out). Functionally, produces ATP from ADP in the presence of a proton gradient across the membrane. The alpha chain is a regulatory subunit. The polypeptide is ATP synthase subunit alpha (Bifidobacterium adolescentis (strain ATCC 15703 / DSM 20083 / NCTC 11814 / E194a)).